The primary structure comprises 307 residues: Serine/threonine-protein phosphatase 4 catalytic subunit (307 aa).

Mn(2+)-binding residues include D54, H56, D82, and N114. The Proton donor role is filled by H115. Residues H164 and H238 each contribute to the Mn(2+) site. L307 bears the Leucine methyl ester mark.

Belongs to the PPP phosphatase family. PP-4 (PP-X) subfamily. Serine/threonine-protein phosphatase 4 (PP4) occurs in different assemblies of the catalytic and one or more regulatory subunits. Mn(2+) serves as cofactor.

It localises to the cytoplasm. The protein localises to the nucleus. Its subcellular location is the cytoskeleton. It is found in the microtubule organizing center. The protein resides in the centrosome. The catalysed reaction is O-phospho-L-seryl-[protein] + H2O = L-seryl-[protein] + phosphate. The enzyme catalyses O-phospho-L-threonyl-[protein] + H2O = L-threonyl-[protein] + phosphate. Protein phosphatase that regulates many processes such as microtubule organization at centrosomes. In Xenopus laevis (African clawed frog), this protein is Serine/threonine-protein phosphatase 4 catalytic subunit (ppp4c).